Here is a 234-residue protein sequence, read N- to C-terminus: Protein-toxin resistance protein KTD1 (234 aa).

The Cytoplasmic portion of the chain corresponds to 1–47 (MQTPSENTDVKMDTLDEPSAHLIEENVALPEDTFSSHLSYVLYEIAH). The chain crosses the membrane as a helical span at residues 48–68 (CKPIMFMIIIIVSLISLIVLF). The tract at residues 68–75 (FHDNDGCT) is required for resistance to killer toxin K28, a protein-toxin encoded by the M28 virus. Residues 69–76 (HDNDGCTV) lie on the Extracellular side of the membrane. The chain crosses the membrane as a helical span at residues 77-97 (ILVMSLIVASMALMVVAAFTF). At 98–234 (GKAITEQEFM…RKQYPDADLP (137 aa)) the chain is on the cytoplasmic side. A required for resistance to killer toxin K28, a protein-toxin encoded by the M28 virus region spans residues 147-234 (FYSGKKCHEF…RKQYPDADLP (88 aa)). Residues 168–187 (SHSDSSSNSAEDTQSPVSAG) form a disordered region. A compositionally biased stretch (polar residues) spans 177–187 (AEDTQSPVSAG). Lys-217 is covalently cross-linked (Glycyl lysine isopeptide (Lys-Gly) (interchain with G-Cter in ubiquitin)).

This sequence belongs to the DUP/COS family.

The protein resides in the vacuole membrane. It localises to the golgi apparatus. Its subcellular location is the trans-Golgi network membrane. The protein localises to the endosome membrane. Its function is as follows. Confers resistance to killer toxin K28, a protein-toxin encoded by the M28 virus that uses S.cerevisiae as a host. Probably acts against K28 after endocytosis of the protein-toxin. This Saccharomyces cerevisiae (strain ATCC 204508 / S288c) (Baker's yeast) protein is Protein-toxin resistance protein KTD1.